Consider the following 432-residue polypeptide: Enolase (432 aa).

(2R)-2-phosphoglycerate is bound at residue glutamine 167. Catalysis depends on glutamate 209, which acts as the Proton donor. Residues aspartate 246, glutamate 287, and aspartate 314 each coordinate Mg(2+). Residues lysine 339, arginine 368, serine 369, and lysine 390 each contribute to the (2R)-2-phosphoglycerate site. The active-site Proton acceptor is the lysine 339.

The protein belongs to the enolase family. Mg(2+) serves as cofactor.

The protein resides in the cytoplasm. It is found in the secreted. The protein localises to the cell surface. The catalysed reaction is (2R)-2-phosphoglycerate = phosphoenolpyruvate + H2O. It functions in the pathway carbohydrate degradation; glycolysis; pyruvate from D-glyceraldehyde 3-phosphate: step 4/5. Functionally, catalyzes the reversible conversion of 2-phosphoglycerate (2-PG) into phosphoenolpyruvate (PEP). It is essential for the degradation of carbohydrates via glycolysis. This is Enolase from Prochlorococcus marinus (strain SARG / CCMP1375 / SS120).